The primary structure comprises 1116 residues: Error-prone DNA polymerase (1116 aa).

This sequence belongs to the DNA polymerase type-C family. DnaE2 subfamily.

The protein resides in the cytoplasm. The enzyme catalyses DNA(n) + a 2'-deoxyribonucleoside 5'-triphosphate = DNA(n+1) + diphosphate. DNA polymerase involved in damage-induced mutagenesis and translesion synthesis (TLS). It is not the major replicative DNA polymerase. The polypeptide is Error-prone DNA polymerase (Sinorhizobium medicae (strain WSM419) (Ensifer medicae)).